The following is a 239-amino-acid chain: DNA repair protein RecO (239 aa).

It belongs to the RecO family.

Functionally, involved in DNA repair and RecF pathway recombination. This Cereibacter sphaeroides (strain KD131 / KCTC 12085) (Rhodobacter sphaeroides) protein is DNA repair protein RecO.